The following is a 33-amino-acid chain: Beta/kappa-theraphotoxin-Hlv1a (33 aa).

3 disulfides stabilise this stretch: C2-C17, C9-C22, and C16-C29. I33 is modified (isoleucine amide).

This sequence belongs to the neurotoxin 10 (Hwtx-1) family. 11 (haplotoxin-2) subfamily. In terms of tissue distribution, expressed by the venom gland.

The protein localises to the secreted. Its function is as follows. Spider venom neurotoxin that blocks voltage-gated sodium channel Nav1.3/SCN3A in human (IC(50)=80 nM) and rat (IC(50)=160 nM). Partially inhibits human Kv11.1/KCNH2/ERG (25% at 175 uM). The chain is Beta/kappa-theraphotoxin-Hlv1a from Cyriopagopus lividus (Cobalt blue tarantula).